We begin with the raw amino-acid sequence, 506 residues long: Glutamate--tRNA ligase (506 aa).

The 'HIGH' region signature appears at 23–33 (PSPTGTPHVGL). The 'KMSKS' region signature appears at 267–271 (KLSKR). Residue K270 participates in ATP binding.

The protein belongs to the class-I aminoacyl-tRNA synthetase family. Glutamate--tRNA ligase type 1 subfamily. Monomer.

It localises to the cytoplasm. The catalysed reaction is tRNA(Glu) + L-glutamate + ATP = L-glutamyl-tRNA(Glu) + AMP + diphosphate. In terms of biological role, catalyzes the attachment of glutamate to tRNA(Glu) in a two-step reaction: glutamate is first activated by ATP to form Glu-AMP and then transferred to the acceptor end of tRNA(Glu). The protein is Glutamate--tRNA ligase of Clavibacter michiganensis subsp. michiganensis (strain NCPPB 382).